We begin with the raw amino-acid sequence, 337 residues long: Serpentine receptor class delta-18 (337 aa).

6 consecutive transmembrane segments (helical) span residues 2–22 (IIFFEIWHWSWALLGCYLNLL), 90–110 (VGLSFFLHCLTHSVWSLLLSF), 130–150 (LILVFYIPSLIQALTYWTIFA), 187–207 (IYSIGHICLPFFPVYITIFIL), 236–256 (ALTIQAFIPIFVGIAVTFYFL), and 270–290 (SIYAVAILAPALSPITYLYFV).

Belongs to the nematode receptor-like protein srd family.

Its subcellular location is the membrane. This Caenorhabditis elegans protein is Serpentine receptor class delta-18 (srd-18).